Reading from the N-terminus, the 1021-residue chain is Putative 115 kDa protein in type-1 retrotransposable element R1DM (1021 aa).

Residues R479–V741 form the Reverse transcriptase domain. Positions C955–C971 are gag-like cysteine motif.

In Drosophila melanogaster (Fruit fly), this protein is Putative 115 kDa protein in type-1 retrotransposable element R1DM (R1A1-element\ORF2).